The primary structure comprises 985 residues: Phosphoenolpyruvate carboxylase (985 aa).

Residues 1–17 show a composition bias toward low complexity; it reads MTQSAARRASSRATPAR. A disordered region spans residues 1–55; sequence MTQSAARRASSRATPARKTPPAPASQTPAPSPGGTAGTALGPTSRRSSGSAAAKD. Active-site residues include His193 and Lys634.

The protein belongs to the PEPCase type 1 family. It depends on Mg(2+) as a cofactor.

It catalyses the reaction oxaloacetate + phosphate = phosphoenolpyruvate + hydrogencarbonate. In terms of biological role, forms oxaloacetate, a four-carbon dicarboxylic acid source for the tricarboxylic acid cycle. This chain is Phosphoenolpyruvate carboxylase, found in Ralstonia nicotianae (strain ATCC BAA-1114 / GMI1000) (Ralstonia solanacearum).